The primary structure comprises 184 residues: uncharacterized protein (184 aa).

The segment at Pro-32–Arg-52 is disordered.

The protein localises to the mitochondrion. This is an uncharacterized protein from Arabidopsis thaliana (Mouse-ear cress).